The following is a 393-amino-acid chain: Chalcone synthase 2 (393 aa).

C166 is an active-site residue.

It belongs to the thiolase-like superfamily. Chalcone/stilbene synthases family.

It carries out the reaction (E)-4-coumaroyl-CoA + 3 malonyl-CoA + 3 H(+) = 2',4,4',6'-tetrahydroxychalcone + 3 CO2 + 4 CoA. It functions in the pathway secondary metabolite biosynthesis; flavonoid biosynthesis. In terms of biological role, the primary product of this enzyme is 4,2',4',6'-tetrahydroxychalcone (also termed naringenin-chalcone or chalcone) which can under specific conditions spontaneously isomerize into naringenin. The sequence is that of Chalcone synthase 2 (CHS2) from Ruta graveolens (Common rue).